A 247-amino-acid chain; its full sequence is 3-deoxy-manno-octulosonate cytidylyltransferase (247 aa).

This sequence belongs to the KdsB family.

The protein localises to the cytoplasm. It catalyses the reaction 3-deoxy-alpha-D-manno-oct-2-ulosonate + CTP = CMP-3-deoxy-beta-D-manno-octulosonate + diphosphate. The protein operates within nucleotide-sugar biosynthesis; CMP-3-deoxy-D-manno-octulosonate biosynthesis; CMP-3-deoxy-D-manno-octulosonate from 3-deoxy-D-manno-octulosonate and CTP: step 1/1. It participates in bacterial outer membrane biogenesis; lipopolysaccharide biosynthesis. Its function is as follows. Activates KDO (a required 8-carbon sugar) for incorporation into bacterial lipopolysaccharide in Gram-negative bacteria. The chain is 3-deoxy-manno-octulosonate cytidylyltransferase from Bdellovibrio bacteriovorus (strain ATCC 15356 / DSM 50701 / NCIMB 9529 / HD100).